The primary structure comprises 128 residues: uncharacterized protein (128 aa).

Transmembrane regions (helical) follow at residues isoleucine 30–serine 50, valine 65–glutamine 85, and tryptophan 93–valine 113.

The protein localises to the cell membrane. This is an uncharacterized protein from Rickettsia prowazekii (strain Madrid E).